The following is a 594-amino-acid chain: Invasin CotH2 (594 aa).

An N-terminal signal peptide occupies residues 1–19 (MKLSLTIVSSSFLVAIAHA). 7 N-linked (GlcNAc...) asparagine glycosylation sites follow: asparagine 77, asparagine 162, asparagine 226, asparagine 316, asparagine 441, asparagine 519, and asparagine 533. The tract at residues 529–565 (PPAANGTATSTNDGGNTHTAAGESKPASSSESSGSKI) is disordered. The span at 534–547 (GTATSTNDGGNTHT) shows a compositional bias: polar residues. Residues 548 to 565 (AAGESKPASSSESSGSKI) are compositionally biased toward low complexity. A lipid anchor (GPI-anchor amidated serine) is attached at serine 571. Positions 572–594 (GASRSAVSTVLLGVTALVATAIF) are cleaved as a propeptide — removed in mature form.

As to quaternary structure, interacts with host epithelial cell surface HSPA5/BiP protein.

The protein resides in the cell membrane. In terms of biological role, promotes invasion of host epithelial cells by adhering to receptors on the host cell surface to facilitate endocytosis of the pathogen into host cells. Binds HSPA5/BiP protein on the cell surface of host epithelial cells. In Rhizopus delemar (strain RA 99-880 / ATCC MYA-4621 / FGSC 9543 / NRRL 43880) (Mucormycosis agent), this protein is Invasin CotH2.